The following is a 2146-amino-acid chain: YLP motif-containing protein 1 (2146 aa).

Disordered stretches follow at residues 1 to 381 and 562 to 880; these read MYPN…ARLK and PPVM…FKMQ. The segment covering 14–26 has biased composition (pro residues); the sequence is YPPPPVPPPPPVA. Composition is skewed to low complexity over residues 27–48 and 58–79; these read LPEASPGPGYSSSTTPAAPSSS and LAQLQQLQQMHQKQMQCVLQPH. Pro residues-rich tracts occupy residues 80–92, 101–113, 147–157, 165–175, and 183–194; these read HLPPPPLPPPPVM, QPPPPPMPPPPGP, PESPPVPPGSY, MPPPQPPPSYY, and YLPPAQPSPSQS. Low complexity predominate over residues 195–237; the sequence is PPSQSYLAPTPSYSSSSSSSQSYLSHSQSYLPSSQASPSRPSQ. Polar residues-rich tracts occupy residues 256 to 279 and 286 to 308; these read NKTTVQQEPLESGAKNKSTEQQQA and STMTPQEQQQYWYRQHLLSLQQR. A compositionally biased stretch (basic residues) spans 309–319; sequence TKVHLPGHKKG. Basic and acidic residues predominate over residues 325–334; sequence DTPEPVKEEV. 3 stretches are compositionally biased toward pro residues: residues 349–368, 562–579, and 586–642; these read EEPPLPPPNEEVPPPLPPEE, PPVMPPSLPTSVPPPGMP, and GPPP…PQGI. A compositionally biased stretch (low complexity) spans 643-663; the sequence is PPQLTAAPVPPASSSQSSQVP. Residues 692-702 show a composition bias toward polar residues; that stretch reads AGPSEQVNSKA. K735 is modified (N6-methyllysine). S756 is subject to Phosphoserine. Residues 758-806 show a composition bias toward basic and acidic residues; sequence RGPRFDGPRRFEDLGSRCEGPRPKGPRFEGNRPDGPRPRYEGHPAEGTK. R814 is subject to Omega-N-methylarginine. 2 stretches are compositionally biased toward polar residues: residues 820–835 and 868–880; these read FYITPSTSLSPRQSGP and DTSSNQQKNFKMQ. S829 carries the phosphoserine modification. Residue R831 is modified to Omega-N-methylarginine. Residue K891 forms a Glycyl lysine isopeptide (Lys-Gly) (interchain with G-Cter in SUMO2) linkage. Disordered regions lie at residues 895 to 1211 and 1243 to 1351; these read AAQS…GRNA and NRED…DDRW. Composition is skewed to polar residues over residues 896 to 909 and 923 to 933; these read AQSNENLSDSQQEP and NWDQNVQSMET. K983 is covalently cross-linked (Glycyl lysine isopeptide (Lys-Gly) (interchain with G-Cter in SUMO1); alternate). K983 is covalently cross-linked (Glycyl lysine isopeptide (Lys-Gly) (interchain with G-Cter in SUMO2); alternate). Basic and acidic residues-rich tracts occupy residues 994–1012, 1027–1036, and 1053–1093; these read NNQDKGLPRPDNRDNRLEG, RMEDTRDKGL, and KQED…REKV. A Glycyl lysine isopeptide (Lys-Gly) (interchain with G-Cter in SUMO1); alternate cross-link involves residue K1053. Residue K1053 forms a Glycyl lysine isopeptide (Lys-Gly) (interchain with G-Cter in SUMO2); alternate linkage. A phosphoserine mark is found at S1100 and S1119. Composition is skewed to basic and acidic residues over residues 1129–1211 and 1243–1264; these read GSRE…GRNA and NREDRFSAPPSRSHDGDRRGPW. The span at 1266 to 1276 shows a compositional bias: acidic residues; sequence DDWERDQDMDE. Positions 1277–1328 are enriched in basic and acidic residues; it reads DYNREMERDMDRDVDRISRPMDMYDRSLDNEWDRDYGRPLDEQESQFRERDI. Positions 1330-1342 are enriched in pro residues; the sequence is SLPPLPPLPPLPP. Phosphoserine is present on S1402. Disordered regions lie at residues 1407–1438, 1469–1573, and 1602–1828; these read PSDVDRHSPMAEHMPSSHHSSEMMGSDASLDS, QKEQ…EQER, and IPSA…PPGR. Residues 1417 to 1430 are compositionally biased toward low complexity; the sequence is AEHMPSSHHSSEMM. Residues 1469–1480 show a composition bias toward basic and acidic residues; it reads QKEQLQKMKDFG. The segment covering 1505–1520 has biased composition (pro residues); the sequence is MYPPPGSYRPPPPMGK. Residues 1521-1539 show a composition bias toward low complexity; sequence PPGSIVRPSAPPARSSVPV. 2 stretches are compositionally biased toward pro residues: residues 1540 to 1562 and 1606 to 1636; these read TRPPVPIPPPPPPPPLPPPPPVI and PVLPPPPVHSSIPPPGPVPMGMPPMSKPPPV. K1652 is covalently cross-linked (Glycyl lysine isopeptide (Lys-Gly) (interchain with G-Cter in SUMO2)). Composition is skewed to basic and acidic residues over residues 1662–1696, 1704–1774, 1783–1793, and 1809–1828; these read ITLRPDPLPERSTFETEHAGQRDRYDRERDREPYF, ADHR…DRPV, GERRTYPEERM, and RVEKKPESKNVDDILKPPGR. K1710 participates in a covalent cross-link: Glycyl lysine isopeptide (Lys-Gly) (interchain with G-Cter in SUMO2). The interval 2096 to 2103 is involved in interaction with PPP1CA; that stretch reads KKRVRWAD.

In terms of assembly, interacts with PPP1CA and NCOA5. Forms a complex with ILF2, ILF3, KHDRBS1, RBMX, NCOA5 and PPP1CA. Expressed in neuronal, neuroblastoma and embryonic kidney cell lines (at protein level).

The protein localises to the nucleus. It is found in the nucleus speckle. Plays a role in the reduction of telomerase activity during differentiation of embryonic stem cells by binding to the core promoter of TERT and controlling its down-regulation. The chain is YLP motif-containing protein 1 (YLPM1) from Homo sapiens (Human).